Consider the following 693-residue polypeptide: Kinesin-like protein KIFC1 (693 aa).

2 disordered regions span residues 1–24 (MRGR…VRTT) and 48–156 (VKSS…KRPA). Low complexity-rich tracts occupy residues 49-59 (KSSSRLPLPGS) and 127-138 (QKPAPAAPAQKP). Ser52 and Ser59 each carry phosphoserine. Positions 165 to 334 (DLHEELKQYR…QELKGNIRVF (170 aa)) form a coiled coil. The Kinesin motor domain maps to 330 to 683 (NIRVFCRVRP…LRFASKVNQC (354 aa)). Thr379 carries the post-translational modification Phosphothreonine. 430-437 (GQTGSGKT) contributes to the ATP binding site.

It belongs to the TRAFAC class myosin-kinesin ATPase superfamily. Kinesin family. NCD subfamily. As to quaternary structure, binds NUBP1 and NUBP2. Interacts with PPP1R42.

The protein resides in the nucleus. Its subcellular location is the cytoplasm. The protein localises to the cytoskeleton. It is found in the microtubule organizing center. It localises to the centrosome. The protein resides in the spindle. Its subcellular location is the early endosome. Minus end-directed microtubule-dependent motor required for bipolar spindle formation. May contribute to movement of early endocytic vesicles. Regulates cilium formation and structure. The sequence is that of Kinesin-like protein KIFC1 from Rattus norvegicus (Rat).